A 360-amino-acid polypeptide reads, in one-letter code: Chorismate synthase (360 aa).

An NADP(+)-binding site is contributed by Arg-46. FMN contacts are provided by residues 123-125, 235-236, Gly-275, 290-294, and Arg-316; these read RSS, NA, and KPTPS.

Belongs to the chorismate synthase family. In terms of assembly, homotetramer. Requires FMNH2 as cofactor.

The catalysed reaction is 5-O-(1-carboxyvinyl)-3-phosphoshikimate = chorismate + phosphate. It functions in the pathway metabolic intermediate biosynthesis; chorismate biosynthesis; chorismate from D-erythrose 4-phosphate and phosphoenolpyruvate: step 7/7. In terms of biological role, catalyzes the anti-1,4-elimination of the C-3 phosphate and the C-6 proR hydrogen from 5-enolpyruvylshikimate-3-phosphate (EPSP) to yield chorismate, which is the branch point compound that serves as the starting substrate for the three terminal pathways of aromatic amino acid biosynthesis. This reaction introduces a second double bond into the aromatic ring system. The sequence is that of Chorismate synthase from Wolinella succinogenes (strain ATCC 29543 / DSM 1740 / CCUG 13145 / JCM 31913 / LMG 7466 / NCTC 11488 / FDC 602W) (Vibrio succinogenes).